The sequence spans 276 residues: Putative pyridoxine kinase (276 aa).

N139 serves as a coordination point for ATP. E142 lines the Mg(2+) pocket. ATP contacts are provided by residues 176 to 180, D188, G213, and K238; that span reads KGGKA.

This sequence belongs to the ThiD family.

The enzyme catalyses pyridoxal + ATP = pyridoxal 5'-phosphate + ADP + H(+). Its function is as follows. Phosphorylates B6 vitamers; functions in a salvage pathway. Uses pyridoxal, pyridoxine, and pyridoxamine as substrates. This is Putative pyridoxine kinase (pdxK) from Staphylococcus aureus (strain COL).